The chain runs to 231 residues: Cytidylate kinase 1 (231 aa).

Position 7-15 (7-15) interacts with ATP; it reads GPSGAGKGT.

The protein belongs to the cytidylate kinase family. Type 1 subfamily.

It is found in the cytoplasm. It catalyses the reaction CMP + ATP = CDP + ADP. The catalysed reaction is dCMP + ATP = dCDP + ADP. The chain is Cytidylate kinase 1 from Haemophilus influenzae (strain ATCC 51907 / DSM 11121 / KW20 / Rd).